A 296-amino-acid chain; its full sequence is D-alanine--D-alanine ligase (296 aa).

Positions 103–293 constitute an ATP-grasp domain; that stretch reads KEILMHYRMP…FDSFVKRIIE (191 aa). An ATP-binding site is contributed by 129-180; the sequence is ISFPVAVKPSSGGSSIATFKVKSIQELKHAYEEASKYGEVMIEQWVTGKEIT. Aspartate 247, glutamate 260, and asparagine 262 together coordinate Mg(2+).

This sequence belongs to the D-alanine--D-alanine ligase family. Mg(2+) is required as a cofactor. Requires Mn(2+) as cofactor.

It localises to the cytoplasm. It catalyses the reaction 2 D-alanine + ATP = D-alanyl-D-alanine + ADP + phosphate + H(+). The protein operates within cell wall biogenesis; peptidoglycan biosynthesis. Functionally, cell wall formation. In Francisella tularensis subsp. tularensis (strain WY96-3418), this protein is D-alanine--D-alanine ligase.